Here is a 195-residue protein sequence, read N- to C-terminus: MRELEERILKDGRVLPGEVLKVDGFLNHQVDPDLMFAMGTEFAHLFQDAGVTKILTVESSGIAPAVMAGLAMHVPVVFARKHKSVTLIDDLYTAEVYSYTKKTSNHISIAKKFLQADDQVLLIDDFLANGQAVQGMFEICDKAHVKIAGVGIVIEKVFQTGHQLIADRGVRLESLAQITSFDGDRVHFASEDTQA.

Xanthine is bound by residues Leu20 and Asn27. 128-132 contributes to the 5-phospho-alpha-D-ribose 1-diphosphate binding site; sequence ANGQA. Lys156 contributes to the xanthine binding site.

The protein belongs to the purine/pyrimidine phosphoribosyltransferase family. Xpt subfamily. As to quaternary structure, homodimer.

The protein localises to the cytoplasm. It catalyses the reaction XMP + diphosphate = xanthine + 5-phospho-alpha-D-ribose 1-diphosphate. The protein operates within purine metabolism; XMP biosynthesis via salvage pathway; XMP from xanthine: step 1/1. Its function is as follows. Converts the preformed base xanthine, a product of nucleic acid breakdown, to xanthosine 5'-monophosphate (XMP), so it can be reused for RNA or DNA synthesis. This Lactiplantibacillus plantarum (strain ATCC BAA-793 / NCIMB 8826 / WCFS1) (Lactobacillus plantarum) protein is Xanthine phosphoribosyltransferase.